The primary structure comprises 415 residues: Serine hydroxymethyltransferase (415 aa).

(6S)-5,6,7,8-tetrahydrofolate is bound by residues Leu-117 and 121–123 (GHL). Position 226 is an N6-(pyridoxal phosphate)lysine (Lys-226). Glu-241 is a (6S)-5,6,7,8-tetrahydrofolate binding site.

Belongs to the SHMT family. As to quaternary structure, homodimer. Requires pyridoxal 5'-phosphate as cofactor.

It localises to the cytoplasm. The catalysed reaction is (6R)-5,10-methylene-5,6,7,8-tetrahydrofolate + glycine + H2O = (6S)-5,6,7,8-tetrahydrofolate + L-serine. It functions in the pathway one-carbon metabolism; tetrahydrofolate interconversion. Its pathway is amino-acid biosynthesis; glycine biosynthesis; glycine from L-serine: step 1/1. Catalyzes the reversible interconversion of serine and glycine with tetrahydrofolate (THF) serving as the one-carbon carrier. This reaction serves as the major source of one-carbon groups required for the biosynthesis of purines, thymidylate, methionine, and other important biomolecules. Also exhibits THF-independent aldolase activity toward beta-hydroxyamino acids, producing glycine and aldehydes, via a retro-aldol mechanism. This chain is Serine hydroxymethyltransferase, found in Bacillus subtilis (strain 168).